The chain runs to 727 residues: ATP-dependent zinc metalloprotease FtsH (727 aa).

At 1–6 (MQKAFR) the chain is on the cytoplasmic side. Residues 7 to 27 (NVLVIAIIGVIIFGVFSYING) traverse the membrane as a helical segment. Over 28 to 110 (NGNTPKQLSY…KVKEEEKQSV (83 aa)) the chain is Extracellular. A helical membrane pass occupies residues 111–131 (FVSMLTTLIPVLIIAFLFIFF). At 132–727 (LSQAQGGGGG…PNDPNNPSNR (596 aa)) the chain is on the cytoplasmic side. 205-212 (GPPGTGKT) is a binding site for ATP. His427 contributes to the Zn(2+) binding site. Glu428 is an active-site residue. Residues His431 and Asp503 each contribute to the Zn(2+) site. Composition is skewed to basic and acidic residues over residues 645–684 (LEEG…DQLR) and 691–706 (NDQH…DTGH). Positions 645–727 (LEEGKEDMRE…PNDPNNPSNR (83 aa)) are disordered. Residues 710–727 (PNIDKPYNPNDPNNPSNR) are compositionally biased toward low complexity.

This sequence in the central section; belongs to the AAA ATPase family. In the C-terminal section; belongs to the peptidase M41 family. In terms of assembly, homohexamer. Requires Zn(2+) as cofactor.

It is found in the cell membrane. Its function is as follows. Acts as a processive, ATP-dependent zinc metallopeptidase for both cytoplasmic and membrane proteins. Plays a role in the quality control of integral membrane proteins. This Staphylococcus haemolyticus (strain JCSC1435) protein is ATP-dependent zinc metalloprotease FtsH.